Here is a 1194-residue protein sequence, read N- to C-terminus: MSLPQRPGKTSPRREETSAFREPSRRRRRESDSLSNNDPTSPRHHRHHRSHSSRHQHDIDEERAEEGGIRRKRSLVKPERGRMDPSHPNYLYRQKTQNMPTYNPMTGNEPLIHEEGEAETNSTPSMDSKRKDALYGAHGNVNKPMERVPTRHRSKKRKGSRKISKREAAAEKRRRKAMEQVRPPSLWTTYCSVITFWAPDFVLKCFGMPQKAQRSAWREKIGLISIILMIAAFVGFLTFGFTATVCGTPPTRLKINEIGSGYMIFHGQAYDLTKSTHPAAAGIPDMTNVLYDLPHKYGGQDGSFFFQEVNGACKGLITRTENSDIPTNSNGDLAWYFPCHAFNQDGSSEPNTTVSYYNGWACHTSGSARKSFYSLKNSGDVYFTWEDTKNTSRKLAVYSGNVLDLNLLNWFDDTQVNYPTKFKDLRDNDDIRGVDLTYYFQTGEDKQIGKCLSQIIKVGSIDTDTVGCIASQVVLYVSLIFILSIVIVKFAFALLFQWFLAPRFAAQKTSMGAVDSKARNQQIEDWSNDIYRPGPRLADPVPGDRMSKRASFLPTTSRFSSPYTVSNGGKQKPQWVTMASQNSTTRLVPPASGTTPSIYRQSHNGLGNVSVDNSRLNPSASRTSLVQDSRYSTVIPDSEGIGSAGYVHELVVPQPPPDWQPYGFPLAHAMCLVTCYSEGEEGIRTTLDSIALTDYPNSHKSIVVICDGIIKGKGEEFSTPDIVLRMMRDPIIPPEEVEAFSYVAVATGSKRHNMAKVYAGFYDYGEHSIIPVEKQQRVPMMIIVKCGTPAEATAAKPGNRGKRDSQIILMSFLQKVMFDERMTELEYEMFNGLLHVTGIPPDFYEVVLMVDADTKVFPDSLTHMISAMVKDPEVMGLCGETKIANKTDSWVTMIQVFEYFVSHHQSKAFESVFGGVTCLPGCFSMYRIKAPKGGQNYWVPILANPDIVEHYSENVVDTLHKKNLLLLGEDRYLSTLMLRTFPKRKQIFVPQAVCKTVVPDKFMVLLSQRRRWINSTVHNLMELVLVRDLCGTFCFSMQFVIFVELVGTVVLPAAISFTIYVVVSSIIKQPVQIIPLVLLALILGLPGVLVVVTAHRLVYVLWMLVYLISLPIWNFVLPTYAYWKFDDFSWGDTRKTAGEKDKGHEDGEGEFDSSKITMKRWRDFEKDRRLRMQAGWQLPVGGHPPMPYEPYPEY.

Disordered regions lie at residues 1–91 (MSLP…PNYL) and 136–177 (GAHG…RRKA). Basic and acidic residues predominate over residues 12-23 (PRREETSAFREP). Residues 42–54 (PRHHRHHRSHSSR) show a composition bias toward basic residues. Basic and acidic residues-rich tracts occupy residues 55-69 (HQHDIDEERAEEGGI) and 76-85 (VKPERGRMDP). Over residues 150–164 (TRHRSKKRKGSRKIS) the composition is skewed to basic residues. Residues 221–241 (IGLISIILMIAAFVGFLTFGF) form a helical membrane-spanning segment. Asn351 and Asn390 each carry an N-linked (GlcNAc...) asparagine glycan. Residues 476-496 (YVSLIFILSIVIVKFAFALLF) form a helical membrane-spanning segment. N-linked (GlcNAc...) asparagine glycosylation is found at Asn582, Asn608, Asn885, and Asn1014. Helical transmembrane passes span 1039-1059 (FVIFVELVGTVVLPAAISFTI), 1073-1093 (IIPLVLLALILGLPGVLVVVT), and 1097-1117 (LVYVLWMLVYLISLPIWNFVL).

This sequence belongs to the chitin synthase family. Class V subfamily.

It is found in the cell membrane. The catalysed reaction is [(1-&gt;4)-N-acetyl-beta-D-glucosaminyl](n) + UDP-N-acetyl-alpha-D-glucosamine = [(1-&gt;4)-N-acetyl-beta-D-glucosaminyl](n+1) + UDP + H(+). Functionally, polymerizes chitin, a structural polymer of the cell wall and septum, by transferring the sugar moiety of UDP-GlcNAc to the non-reducing end of the growing chitin polymer. Responsible for synthesis of 30-40% of the chitin in the cells. ChsA and chsD play redundant functions in conidia formation. The chitin synthesized by the chsD-encoded isozyme contributes to the rigidity of the walls of germinating conidia, of the subapical region of hyphae, and of conidiophore vesicles, but is not necessary for normal morphology of these cells. In Emericella nidulans (strain FGSC A4 / ATCC 38163 / CBS 112.46 / NRRL 194 / M139) (Aspergillus nidulans), this protein is Chitin synthase C.